Consider the following 317-residue polypeptide: Orange carotenoid-binding protein (317 aa).

The 152-residue stretch at Ala18–Gly169 folds into the OCP N-terminal domain. Leu37, Tyr203, and Trp290 together coordinate 3'-hydroxyechinenone.

This sequence belongs to the orange carotenoid-binding protein family. Homodimer. Requires 3'-hydroxyechinenone as cofactor. In terms of processing, proteolytically cleaved into a red 16.7 kDa form named red carotenoid-binding protein (RCP) which lacks 15 residues from the N-terminus and approximately 150 residues from the C-terminus.

The protein resides in the cellular thylakoid membrane. In terms of biological role, acts as a blue-light photoreceptor and photo-protectant. Essential for inhibiting damaged induced by excess blue-green light via a process known as non-photochemical quenching (NPQ). Binding carotenoids improves OCP's intrinsic photoprotectant activity by broadening its absorption spectrum and facilitating the dissipation of absorbed energy. In the dark or dim light the stable inactive form (OCP-O) is orange, upon illumination with blue-green light it converts to a metastable active red form (OCP-R), inducing energy dissipation, quenching cellular fluorescence via NPQ. This is Orange carotenoid-binding protein from Limnospira maxima (Arthrospira maxima).